The following is a 510-amino-acid chain: NAD(P)H-quinone oxidoreductase subunit 2 A, chloroplastic (510 aa).

Helical transmembrane passes span 24–44, 59–79, 99–119, 124–144, 149–169, 183–203, 229–249, 295–315, 323–343, 354–374, 395–415, and 418–438; these read LLLF…GLIL, WFYF…LFRW, IFQF…VEYI, MAIT…MFLC, LITI…LSGY, YLLM…WLYG, ISLA…PAPF, WHLL…LLAI, MLAY…IVGD, YMLF…LFGL, ALSL…AGFF, and LYLF…IGLL.

Belongs to the complex I subunit 2 family. As to quaternary structure, NDH is composed of at least 16 different subunits, 5 of which are encoded in the nucleus.

It is found in the plastid. It localises to the chloroplast thylakoid membrane. The enzyme catalyses a plastoquinone + NADH + (n+1) H(+)(in) = a plastoquinol + NAD(+) + n H(+)(out). The catalysed reaction is a plastoquinone + NADPH + (n+1) H(+)(in) = a plastoquinol + NADP(+) + n H(+)(out). In terms of biological role, NDH shuttles electrons from NAD(P)H:plastoquinone, via FMN and iron-sulfur (Fe-S) centers, to quinones in the photosynthetic chain and possibly in a chloroplast respiratory chain. The immediate electron acceptor for the enzyme in this species is believed to be plastoquinone. Couples the redox reaction to proton translocation, and thus conserves the redox energy in a proton gradient. This chain is NAD(P)H-quinone oxidoreductase subunit 2 A, chloroplastic, found in Triticum aestivum (Wheat).